The sequence spans 664 residues: Macrolide export ATP-binding/permease protein MacB (664 aa).

Residues 8–245 (LELVDVHRTY…AGPSVPLTLD (238 aa)) form the ABC transporter domain. Position 44 to 51 (44 to 51 (GSSGSGKS)) interacts with ATP. The next 4 membrane-spanning stretches (helical) occupy residues 283–303 (LLSV…MALG), 543–563 (GAIA…IMLV), 602–622 (IIGI…AGWA), and 627–647 (IVSI…FGLW).

This sequence belongs to the ABC transporter superfamily. Macrolide exporter (TC 3.A.1.122) family. Homodimer.

It localises to the cell inner membrane. Functionally, non-canonical ABC transporter that contains transmembrane domains (TMD), which form a pore in the inner membrane, and an ATP-binding domain (NBD), which is responsible for energy generation. Confers resistance against macrolides. This Chlorobium luteolum (strain DSM 273 / BCRC 81028 / 2530) (Pelodictyon luteolum) protein is Macrolide export ATP-binding/permease protein MacB.